The primary structure comprises 285 residues: Bifunctional protein FolD (285 aa).

Residues 166–168 (GAS) and I232 each bind NADP(+).

Belongs to the tetrahydrofolate dehydrogenase/cyclohydrolase family. As to quaternary structure, homodimer.

The catalysed reaction is (6R)-5,10-methylene-5,6,7,8-tetrahydrofolate + NADP(+) = (6R)-5,10-methenyltetrahydrofolate + NADPH. It catalyses the reaction (6R)-5,10-methenyltetrahydrofolate + H2O = (6R)-10-formyltetrahydrofolate + H(+). It participates in one-carbon metabolism; tetrahydrofolate interconversion. In terms of biological role, catalyzes the oxidation of 5,10-methylenetetrahydrofolate to 5,10-methenyltetrahydrofolate and then the hydrolysis of 5,10-methenyltetrahydrofolate to 10-formyltetrahydrofolate. The sequence is that of Bifunctional protein FolD from Vibrio atlanticus (strain LGP32) (Vibrio splendidus (strain Mel32)).